A 161-amino-acid polypeptide reads, in one-letter code: FAD synthase (161 aa).

Residues Thr-19 to Phe-20, His-24 to His-27, Asp-106, and Tyr-133 each bind ATP.

Belongs to the archaeal FAD synthase family. As to quaternary structure, homodimer. The cofactor is a divalent metal cation.

It catalyses the reaction FMN + ATP + H(+) = FAD + diphosphate. It participates in cofactor biosynthesis; FAD biosynthesis; FAD from FMN: step 1/1. Its function is as follows. Catalyzes the transfer of the AMP portion of ATP to flavin mononucleotide (FMN) to produce flavin adenine dinucleotide (FAD) coenzyme. This is FAD synthase from Methanothermobacter marburgensis (strain ATCC BAA-927 / DSM 2133 / JCM 14651 / NBRC 100331 / OCM 82 / Marburg) (Methanobacterium thermoautotrophicum).